Consider the following 252-residue polypeptide: MNTFLIIDGLNLVRRIHAAQPNENDVNGLDARVASACKKLLKYHQPSHVAIVWDGDATSWRKTLYEDYKKGRKPMPEALAKSLPALKTHLSELNVNSIDAEAEADDVIATLATKLVNNQGKAIIVSTDKGFTQLTHTNIERWDHFNQAYITIEQREEKLGVERTQFIDYLALAGDSGNKIPGVPGIGPKSASELLKIFRSLSNLYGSLEQVGAKQAKKLEEGKQMARLSYKLVQLQTEIPLNANLSQFRLPQ.

Asp-105 provides a ligand contact to Mg(2+). The 5'-3' exonuclease domain maps to 162-250; sequence ERTQFIDYLA…LNANLSQFRL (89 aa). Leu-172, Ala-173, Pro-181, Val-183, and Ile-186 together coordinate K(+). The interval 185–190 is interaction with DNA; the sequence is GIGPKS.

The protein belongs to the Xni family. The cofactor is Mg(2+). K(+) serves as cofactor.

Has flap endonuclease activity. During DNA replication, flap endonucleases cleave the 5'-overhanging flap structure that is generated by displacement synthesis when DNA polymerase encounters the 5'-end of a downstream Okazaki fragment. This chain is Flap endonuclease Xni, found in Shewanella woodyi (strain ATCC 51908 / MS32).